Consider the following 88-residue polypeptide: Sigma-conotoxin GVIIIA (88 aa).

A signal peptide spans 1–20 (MMSKMGAMFVLLLLFTLASS). A propeptide spanning residues 21–46 (LQEGDVQARKTRLKSDFYRALARDDR) is cleaved from the precursor. Position 55 is a 4-hydroxyproline (Pro-55). Trp-80 is subject to 6'-bromotryptophan. Ser-87 is modified (serine amide).

This sequence belongs to the conotoxin S superfamily. In terms of processing, contains 5 disulfide bonds. As to expression, expressed by the venom duct.

The protein localises to the secreted. Its function is as follows. Sigma-conotoxins bind and inhibit serotonin-gated ion channels. This peptide selectively and reversibly inhibits 5-hydroxytryptamine 3 receptor (HTR3A) through competitive antagonism (IC(50)=53-86.8 nM). This chain is Sigma-conotoxin GVIIIA, found in Conus geographus (Geography cone).